Here is a 461-residue protein sequence, read N- to C-terminus: Photosystem II CP43 reaction center protein (461 aa).

The propeptide occupies 1 to 2 (ME). An N-acetylthreonine modification is found at Thr3. Thr3 is modified (phosphothreonine). 5 helical membrane passes run 57-81 (LFEVAHFIPEKPMYEQGLILLPHLA), 122-143 (LIGPETLEESFPFFGYVWKDKN), 166-188 (KAMYFGGLFDPWSVGGGDVRVIT), 243-263 (KPWAWARRAFVWSGEAYLSYS), and 279-300 (WFNNTVYPSEFYGPTGPEASQS). Position 355 (Glu355) interacts with [CaMn4O5] cluster. A helical membrane pass occupies residues 435 to 459 (RARAAAAGFEKGIDRDNEPVLSMKP).

It belongs to the PsbB/PsbC family. PsbC subfamily. As to quaternary structure, PSII is composed of 1 copy each of membrane proteins PsbA, PsbB, PsbC, PsbD, PsbE, PsbF, PsbH, PsbI, PsbJ, PsbK, PsbL, PsbM, PsbT, PsbX, PsbY, PsbZ, Psb30/Ycf12, at least 3 peripheral proteins of the oxygen-evolving complex and a large number of cofactors. It forms dimeric complexes. Binds multiple chlorophylls and provides some of the ligands for the Ca-4Mn-5O cluster of the oxygen-evolving complex. It may also provide a ligand for a Cl- that is required for oxygen evolution. PSII binds additional chlorophylls, carotenoids and specific lipids. is required as a cofactor.

Its subcellular location is the plastid. It localises to the chloroplast thylakoid membrane. Its function is as follows. One of the components of the core complex of photosystem II (PSII). It binds chlorophyll and helps catalyze the primary light-induced photochemical processes of PSII. PSII is a light-driven water:plastoquinone oxidoreductase, using light energy to abstract electrons from H(2)O, generating O(2) and a proton gradient subsequently used for ATP formation. This Tupiella akineta (Green alga) protein is Photosystem II CP43 reaction center protein.